Here is a 294-residue protein sequence, read N- to C-terminus: ATP phosphoribosyltransferase (294 aa).

This sequence belongs to the ATP phosphoribosyltransferase family. Long subfamily. Mg(2+) is required as a cofactor.

It localises to the cytoplasm. It carries out the reaction 1-(5-phospho-beta-D-ribosyl)-ATP + diphosphate = 5-phospho-alpha-D-ribose 1-diphosphate + ATP. It participates in amino-acid biosynthesis; L-histidine biosynthesis; L-histidine from 5-phospho-alpha-D-ribose 1-diphosphate: step 1/9. Its activity is regulated as follows. Feedback inhibited by histidine. Its function is as follows. Catalyzes the condensation of ATP and 5-phosphoribose 1-diphosphate to form N'-(5'-phosphoribosyl)-ATP (PR-ATP). Has a crucial role in the pathway because the rate of histidine biosynthesis seems to be controlled primarily by regulation of HisG enzymatic activity. The chain is ATP phosphoribosyltransferase from Prosthecochloris aestuarii (strain DSM 271 / SK 413).